A 212-amino-acid chain; its full sequence is phospholipase A2 inhibitor and Ly6/PLAUR domain-containing protein (212 aa).

Residues 1 to 24 form the signal peptide; the sequence is MILFRRHRTFLLAFTLLCTLLGLG. The region spanning 27–117 is the UPAR/Ly6 domain; the sequence is LTCEVCKGSG…NSGSVPPPLN (91 aa). 7 disulfide bridges follow: cysteine 29–cysteine 53, cysteine 32–cysteine 39, cysteine 46–cysteine 74, cysteine 80–cysteine 101, cysteine 102–cysteine 107, cysteine 126–cysteine 152, and cysteine 145–cysteine 173.

The protein belongs to the CNF-like-inhibitor family.

The protein localises to the secreted. This Mus musculus (Mouse) protein is phospholipase A2 inhibitor and Ly6/PLAUR domain-containing protein (Pinlyp).